The chain runs to 468 residues: ATP synthase subunit beta (468 aa).

Residue 155–162 (GGAGVGKT) participates in ATP binding.

This sequence belongs to the ATPase alpha/beta chains family. In terms of assembly, F-type ATPases have 2 components, CF(1) - the catalytic core - and CF(0) - the membrane proton channel. CF(1) has five subunits: alpha(3), beta(3), gamma(1), delta(1), epsilon(1). CF(0) has three main subunits: a(1), b(2) and c(9-12). The alpha and beta chains form an alternating ring which encloses part of the gamma chain. CF(1) is attached to CF(0) by a central stalk formed by the gamma and epsilon chains, while a peripheral stalk is formed by the delta and b chains.

The protein resides in the cell membrane. It carries out the reaction ATP + H2O + 4 H(+)(in) = ADP + phosphate + 5 H(+)(out). Its function is as follows. Produces ATP from ADP in the presence of a proton gradient across the membrane. The catalytic sites are hosted primarily by the beta subunits. The polypeptide is ATP synthase subunit beta (Streptococcus gordonii (strain Challis / ATCC 35105 / BCRC 15272 / CH1 / DL1 / V288)).